A 441-amino-acid chain; its full sequence is Ribulose bisphosphate carboxylase large chain (441 aa).

N89 and T139 together coordinate substrate. K141 functions as the Proton acceptor in the catalytic mechanism. K143 lines the substrate pocket. Positions 167, 169, and 170 each coordinate Mg(2+). At K167 the chain carries N6-carboxylysine. H260 serves as the catalytic Proton acceptor. Substrate-binding residues include R261, H293, and S345.

This sequence belongs to the RuBisCO large chain family. Type I subfamily. Heterohexadecamer of 8 large chains and 8 small chains; disulfide-linked. The disulfide link is formed within the large subunit homodimers. Mg(2+) is required as a cofactor. Post-translationally, the disulfide bond which can form in the large chain dimeric partners within the hexadecamer appears to be associated with oxidative stress and protein turnover.

The protein localises to the plastid. It localises to the chloroplast. It carries out the reaction 2 (2R)-3-phosphoglycerate + 2 H(+) = D-ribulose 1,5-bisphosphate + CO2 + H2O. The enzyme catalyses D-ribulose 1,5-bisphosphate + O2 = 2-phosphoglycolate + (2R)-3-phosphoglycerate + 2 H(+). Functionally, ruBisCO catalyzes two reactions: the carboxylation of D-ribulose 1,5-bisphosphate, the primary event in carbon dioxide fixation, as well as the oxidative fragmentation of the pentose substrate in the photorespiration process. Both reactions occur simultaneously and in competition at the same active site. This Polemonium reptans (Greek valerian) protein is Ribulose bisphosphate carboxylase large chain.